Reading from the N-terminus, the 396-residue chain is Phosphoglycerate kinase (396 aa).

Residues 19–21, Arg-34, 57–60, Arg-116, and Arg-153 each bind substrate; these read DFN and HLGK. ATP is bound by residues Lys-204, Glu-324, and 351–354; that span reads GGDT.

Belongs to the phosphoglycerate kinase family. In terms of assembly, monomer.

It is found in the cytoplasm. It carries out the reaction (2R)-3-phosphoglycerate + ATP = (2R)-3-phospho-glyceroyl phosphate + ADP. The protein operates within carbohydrate degradation; glycolysis; pyruvate from D-glyceraldehyde 3-phosphate: step 2/5. This chain is Phosphoglycerate kinase, found in Maridesulfovibrio salexigens (strain ATCC 14822 / DSM 2638 / NCIMB 8403 / VKM B-1763) (Desulfovibrio salexigens).